Here is a 182-residue protein sequence, read N- to C-terminus: Inosine/xanthosine triphosphatase (182 aa).

Mg(2+) is bound by residues Asp-38 and Glu-68. Position 68 to 69 (68 to 69 (EA)) interacts with substrate.

This sequence belongs to the YjjX NTPase family. Homodimer. Mg(2+) is required as a cofactor. It depends on Mn(2+) as a cofactor.

The enzyme catalyses XTP + H2O = XDP + phosphate + H(+). The catalysed reaction is ITP + H2O = IDP + phosphate + H(+). In terms of biological role, phosphatase that hydrolyzes non-canonical purine nucleotides such as XTP and ITP to their respective diphosphate derivatives. Probably excludes non-canonical purines from DNA/RNA precursor pool, thus preventing their incorporation into DNA/RNA and avoiding chromosomal lesions. The protein is Inosine/xanthosine triphosphatase of Erwinia tasmaniensis (strain DSM 17950 / CFBP 7177 / CIP 109463 / NCPPB 4357 / Et1/99).